Consider the following 528-residue polypeptide: GMP synthase [glutamine-hydrolyzing] (528 aa).

The Glutamine amidotransferase type-1 domain occupies 13–204; the sequence is AIVILDFGSQ…VYDICSCEPD (192 aa). The Nucleophile role is filled by Cys90. Active-site residues include His178 and Glu180. Residues 205–403 form the GMPS ATP-PPase domain; that stretch reads WTTNLFIDEA…LGLPDEIVRR (199 aa). 232–238 serves as a coordination point for ATP; the sequence is SGGVDSS.

As to quaternary structure, homodimer.

The enzyme catalyses XMP + L-glutamine + ATP + H2O = GMP + L-glutamate + AMP + diphosphate + 2 H(+). It participates in purine metabolism; GMP biosynthesis; GMP from XMP (L-Gln route): step 1/1. Functionally, catalyzes the synthesis of GMP from XMP. This is GMP synthase [glutamine-hydrolyzing] from Prochlorococcus marinus (strain NATL2A).